Reading from the N-terminus, the 192-residue chain is Genome polyprotein (192 aa).

Residues 1 to 52 (RNLGKVIDTLTCGFADLMGYIPLVGAPLGGAARALAHGVRVLEDGVNYATGN) are Cytoplasmic-facing. The segment at 6 to 57 (VIDTLTCGFADLMGYIPLVGAPLGGAARALAHGVRVLEDGVNYATGNLPGCS) is interaction with APOA2. The segment at 48–51 (YATG) is important for lipid droplets localization. A helical transmembrane segment spans residues 53–73 (LPGCSFSIFLLALLSCLTVPA). Positions 62–75 (LLALLSCLTVPASA) are cleaved as a propeptide — ER anchor for the core protein, removed in mature form by host signal peptidase. Topologically, residues 74–192 (SAYQVRNSSG…WTTQGCNCSI (119 aa)) are lumenal. Residues asparagine 80, asparagine 93, and asparagine 118 are each glycosylated (N-linked (GlcNAc...) asparagine; by host). The tract at residues 149 to 180 (LVGSATLCSALYVGDLCGSVFLVGQLFTFSPR) is important for fusion. Asparagine 189 carries N-linked (GlcNAc...) asparagine; by host glycosylation.

It belongs to the hepacivirus polyprotein family. As to quaternary structure, homooligomer. Interacts with E1 (via C-terminus). Interacts with the non-structural protein 5A. Interacts (via N-terminus) with host STAT1 (via SH2 domain); this interaction results in decreased STAT1 phosphorylation and ubiquitin-mediated proteasome-dependent STAT1 degradation, leading to decreased IFN-stimulated gene transcription. Interacts with host STAT3; this interaction constitutively activates STAT3. Interacts with host LTBR receptor. Interacts with host TNFRSF1A receptor and possibly induces apoptosis. Interacts with host HNRPK. Interacts with host YWHAE. Interacts with host UBE3A/E6AP. Interacts with host DDX3X. Interacts with host APOA2. Interacts with host RXRA protein. Interacts with host SP110 isoform 3/Sp110b; this interaction sequesters the transcriptional corepressor SP110 away from the nucleus. Interacts with host CREB3 nuclear transcription protein; this interaction triggers cell transformation. Interacts with host ACY3. Interacts with host C1QR1. Interacts with host RBM24; this interaction, which enhances the interaction of the mature core protein with 5'-UTR, may inhibit viral translation and favor replication. Interacts with host EIF2AK2/PKR; this interaction induces the autophosphorylation of EIF2AK2. Part of the viral assembly initiation complex composed of NS2, E1, E2, NS3, NS4A, NS5A and the mature core protein. In terms of assembly, forms a heterodimer with envelope glycoprotein E2. Interacts with mature core protein. Interacts with protease NS2. The heterodimer E1/E2 interacts with host CLDN1; this interaction plays a role in viral entry into host cell. Interacts with host SPSB2 (via C-terminus). Part of the viral assembly initiation complex composed of NS2, E1, E2, NS3, NS4A, NS5A and the mature core protein. In terms of processing, specific enzymatic cleavages in vivo yield mature proteins. The structural proteins, core, E1, E2 and p7 are produced by proteolytic processing by host signal peptidases. The core protein precursor is synthesized as a 23 kDa, which is retained in the ER membrane through the hydrophobic signal peptide. Cleavage by the signal peptidase releases the 21 kDa mature core protein. The cleavage of the core protein precursor occurs between aminoacids 176 and 188 but the exact cleavage site is not known. Some degraded forms of the core protein appear as well during the course of infection. The other proteins (p7, NS2, NS3, NS4A, NS4B, NS5A and NS5B) are cleaved by the viral proteases. Autoprocessing between NS2 and NS3 is mediated by the NS2 cysteine protease catalytic domain and regulated by the NS3 N-terminal domain. Phosphorylated by host PKC and PKA. Post-translationally, ubiquitinated; mediated by UBE3A and leading to core protein subsequent proteasomal degradation. In terms of processing, highly N-glycosylated.

It localises to the host endoplasmic reticulum membrane. The protein localises to the host mitochondrion membrane. It is found in the virion. The protein resides in the host cytoplasm. Its subcellular location is the host nucleus. It localises to the host lipid droplet. The protein localises to the virion membrane. Packages viral RNA to form a viral nucleocapsid, and promotes virion budding. Participates in the viral particle production as a result of its interaction with the non-structural protein 5A. Binds RNA and may function as a RNA chaperone to induce the RNA structural rearrangements taking place during virus replication. Modulates viral translation initiation by interacting with viral IRES and 40S ribosomal subunit. Affects various cell signaling pathways, host immunity and lipid metabolism. Prevents the establishment of cellular antiviral state by blocking the interferon-alpha/beta (IFN-alpha/beta) and IFN-gamma signaling pathways and by blocking the formation of phosphorylated STAT1 and promoting ubiquitin-mediated proteasome-dependent degradation of STAT1. Activates STAT3 leading to cellular transformation. Regulates the activity of cellular genes, including c-myc and c-fos. May repress the promoter of p53, and sequester CREB3 and SP110 isoform 3/Sp110b in the cytoplasm. Represses cell cycle negative regulating factor CDKN1A, thereby interrupting an important check point of normal cell cycle regulation. Targets transcription factors involved in the regulation of inflammatory responses and in the immune response: suppresses TNF-induced NF-kappa-B activation, and activates AP-1. Binds to dendritic cells (DCs) via C1QR1, resulting in down-regulation of T-lymphocytes proliferation. Alters lipid metabolism by interacting with hepatocellular proteins involved in lipid accumulation and storage. Induces up-regulation of FAS promoter activity, and thereby contributes to the increased triglyceride accumulation in hepatocytes (steatosis). In terms of biological role, forms a heterodimer with envelope glycoprotein E2, which mediates virus attachment to the host cell, virion internalization through clathrin-dependent endocytosis and fusion with host membrane. Fusion with the host cell is most likely mediated by both E1 and E2, through conformational rearrangements of the heterodimer required for fusion rather than a classical class II fusion mechanism. E1/E2 heterodimer binds host apolipoproteins such as APOB and ApoE thereby forming a lipo-viro-particle (LVP). APOE associated to the LVP allows the initial virus attachment to cell surface receptors such as the heparan sulfate proteoglycans (HSPGs), syndecan-1 (SDC1), syndecan-1 (SDC2), the low-density lipoprotein receptor (LDLR) and scavenger receptor class B type I (SCARB1). The cholesterol transfer activity of SCARB1 allows E2 exposure and binding of E2 to SCARB1 and the tetraspanin CD81. E1/E2 heterodimer binding on CD81 activates the epithelial growth factor receptor (EGFR) signaling pathway. Diffusion of the complex E1-E2-EGFR-SCARB1-CD81 to the cell lateral membrane allows further interaction with Claudin 1 (CLDN1) and occludin (OCLN) to finally trigger HCV entry. The chain is Genome polyprotein from Hepatitis C virus (isolate EC1) (HCV).